Consider the following 388-residue polypeptide: Riboflavin biosynthesis protein RibBA (388 aa).

Residues 1-186 (MEELREAFEE…MDDVWREFVK (186 aa)) form a DHBP synthase region. D-ribulose 5-phosphate-binding positions include 21-22 (RE), D26, 125-129 (RKGHT), and E149. E22 provides a ligand contact to Mg(2+). Position 128 (H128) interacts with Mg(2+). The interval 187–388 (RKLLMKKKAE…LEEIFREVNS (202 aa)) is GTP cyclohydrolase II. 235-239 (RIHSE) provides a ligand contact to GTP. 3 residues coordinate Zn(2+): C240, C251, and C253. GTP-binding positions include Q256, 277–279 (EGR), and T299. The Proton acceptor; for GTP cyclohydrolase activity role is filled by D311. The Nucleophile; for GTP cyclohydrolase activity role is filled by R313. Residues T334 and K339 each coordinate GTP.

This sequence in the N-terminal section; belongs to the DHBP synthase family. The protein in the C-terminal section; belongs to the GTP cyclohydrolase II family. Mg(2+) serves as cofactor. The cofactor is Mn(2+). Zn(2+) is required as a cofactor.

The catalysed reaction is D-ribulose 5-phosphate = (2S)-2-hydroxy-3-oxobutyl phosphate + formate + H(+). It catalyses the reaction GTP + 4 H2O = 2,5-diamino-6-hydroxy-4-(5-phosphoribosylamino)-pyrimidine + formate + 2 phosphate + 3 H(+). The protein operates within cofactor biosynthesis; riboflavin biosynthesis; 2-hydroxy-3-oxobutyl phosphate from D-ribulose 5-phosphate: step 1/1. It participates in cofactor biosynthesis; riboflavin biosynthesis; 5-amino-6-(D-ribitylamino)uracil from GTP: step 1/4. Its function is as follows. Catalyzes the conversion of D-ribulose 5-phosphate to formate and 3,4-dihydroxy-2-butanone 4-phosphate. Functionally, catalyzes the conversion of GTP to 2,5-diamino-6-ribosylamino-4(3H)-pyrimidinone 5'-phosphate (DARP), formate and pyrophosphate. This chain is Riboflavin biosynthesis protein RibBA, found in Thermotoga maritima (strain ATCC 43589 / DSM 3109 / JCM 10099 / NBRC 100826 / MSB8).